The following is a 500-amino-acid chain: Aspartyl/glutamyl-tRNA(Asn/Gln) amidotransferase subunit B (500 aa).

The protein belongs to the GatB/GatE family. GatB subfamily. In terms of assembly, heterotrimer of A, B and C subunits.

The catalysed reaction is L-glutamyl-tRNA(Gln) + L-glutamine + ATP + H2O = L-glutaminyl-tRNA(Gln) + L-glutamate + ADP + phosphate + H(+). It carries out the reaction L-aspartyl-tRNA(Asn) + L-glutamine + ATP + H2O = L-asparaginyl-tRNA(Asn) + L-glutamate + ADP + phosphate + 2 H(+). Allows the formation of correctly charged Asn-tRNA(Asn) or Gln-tRNA(Gln) through the transamidation of misacylated Asp-tRNA(Asn) or Glu-tRNA(Gln) in organisms which lack either or both of asparaginyl-tRNA or glutaminyl-tRNA synthetases. The reaction takes place in the presence of glutamine and ATP through an activated phospho-Asp-tRNA(Asn) or phospho-Glu-tRNA(Gln). The polypeptide is Aspartyl/glutamyl-tRNA(Asn/Gln) amidotransferase subunit B (Clavibacter sepedonicus (Clavibacter michiganensis subsp. sepedonicus)).